Reading from the N-terminus, the 380-residue chain is WAT1-related protein At2g37460 (380 aa).

The next 10 helical transmembrane spans lie at 16–36 (FISM…SKAV), 45–65 (VLVV…AFYF), 71–91 (PKMT…EPVI), 107–127 (FATA…YIFG), 142–162 (VVGT…KGPV), 187–207 (GAVL…LQAI), 216–236 (LSLT…VALV), 254–274 (LTAT…GGVV), 282–302 (FVTA…TIIF), and 306–326 (MYLG…LVIW). The 108-residue stretch at 27–134 (AGMDILSKAV…IFGLERVKLR (108 aa)) folds into the EamA 1 domain. Residues 196–325 (FSYACFMILQ…VICAGLYLVI (130 aa)) form the EamA 2 domain.

The protein belongs to the drug/metabolite transporter (DMT) superfamily. Plant drug/metabolite exporter (P-DME) (TC 2.A.7.4) family.

It localises to the membrane. The polypeptide is WAT1-related protein At2g37460 (Arabidopsis thaliana (Mouse-ear cress)).